The primary structure comprises 826 residues: Leucine--tRNA ligase (826 aa).

The short motif at 41-51 (PYPSGKLHMGH) is the 'HIGH' region element. The 'KMSKS' region motif lies at 586-590 (KMSKS). Position 589 (K589) interacts with ATP.

It belongs to the class-I aminoacyl-tRNA synthetase family.

The protein resides in the cytoplasm. It catalyses the reaction tRNA(Leu) + L-leucine + ATP = L-leucyl-tRNA(Leu) + AMP + diphosphate. This is Leucine--tRNA ligase from Natranaerobius thermophilus (strain ATCC BAA-1301 / DSM 18059 / JW/NM-WN-LF).